Here is a 248-residue protein sequence, read N- to C-terminus: Probable transcriptional regulatory protein PLES_43501 (248 aa).

Belongs to the TACO1 family.

Its subcellular location is the cytoplasm. The protein is Probable transcriptional regulatory protein PLES_43501 of Pseudomonas aeruginosa (strain LESB58).